A 202-amino-acid chain; its full sequence is Nucleoside triphosphate pyrophosphatase (202 aa).

The Proton acceptor role is filled by D79.

This sequence belongs to the Maf family. A divalent metal cation serves as cofactor.

The protein resides in the cytoplasm. The catalysed reaction is a ribonucleoside 5'-triphosphate + H2O = a ribonucleoside 5'-phosphate + diphosphate + H(+). It catalyses the reaction a 2'-deoxyribonucleoside 5'-triphosphate + H2O = a 2'-deoxyribonucleoside 5'-phosphate + diphosphate + H(+). Nucleoside triphosphate pyrophosphatase. May have a dual role in cell division arrest and in preventing the incorporation of modified nucleotides into cellular nucleic acids. This chain is Nucleoside triphosphate pyrophosphatase, found in Rhodopseudomonas palustris (strain ATCC BAA-98 / CGA009).